Reading from the N-terminus, the 276-residue chain is Protein-glutamine gamma-glutamyltransferase (276 aa).

This sequence belongs to the bacillus TGase family.

It catalyses the reaction L-glutaminyl-[protein] + L-lysyl-[protein] = [protein]-L-lysyl-N(6)-5-L-glutamyl-[protein] + NH4(+). Probably plays a role in the assembly of the spore coat proteins by catalyzing epsilon-(gamma-glutamyl)lysine cross-links. This is Protein-glutamine gamma-glutamyltransferase from Bacillus cereus (strain 03BB102).